The primary structure comprises 250 residues: AA9 family lytic polysaccharide monooxygenase E (250 aa).

The first 21 residues, 1 to 21 (MAMSKIMSLTGLLASASLVAG), serve as a signal peptide directing secretion. Cu(2+) contacts are provided by histidine 22 and histidine 107. Intrachain disulfides connect cysteine 77–cysteine 199 and cysteine 118–cysteine 122. A glycan (N-linked (GlcNAc...) asparagine) is linked at asparagine 159. Residues histidine 185 and glutamine 194 each contribute to the O2 site. Tyrosine 196 is a Cu(2+) binding site.

Belongs to the polysaccharide monooxygenase AA9 family. Cu(2+) serves as cofactor.

It is found in the secreted. It catalyses the reaction [(1-&gt;4)-beta-D-glucosyl]n+m + reduced acceptor + O2 = 4-dehydro-beta-D-glucosyl-[(1-&gt;4)-beta-D-glucosyl]n-1 + [(1-&gt;4)-beta-D-glucosyl]m + acceptor + H2O.. Functionally, lytic polysaccharide monooxygenase (LPMO) that depolymerizes crystalline and amorphous polysaccharides via the oxidation of scissile alpha- or beta-(1-4)-glycosidic bonds, yielding C1 or C4 oxidation products. Catalysis by LPMOs requires the reduction of the active-site copper from Cu(II) to Cu(I) by a reducing agent and H(2)O(2) or O(2) as a cosubstrate. This chain is AA9 family lytic polysaccharide monooxygenase E, found in Aspergillus tamarii.